A 740-amino-acid chain; its full sequence is Gramillins biosynthetic cluster protein FGSG_11657 (740 aa).

Disordered stretches follow at residues 353-391 (QADS…SSIP), 414-434 (SKLS…DAAS), 514-535 (PKEQ…GSSD), and 656-686 (EHEG…PQGD). Over residues 656-667 (EHEGEGRADTNR) the composition is skewed to basic and acidic residues. Polar residues predominate over residues 668-682 (HVSTQSNMPTEQSLL).

Its pathway is mycotoxin biosynthesis. Part of the gene cluster that mediates the biosynthesis of gramillins A and B, bicyclic lipopeptides that induce cell death in maize leaves but not in wheat leaves. The nonribosomal peptide synthetase GRA1 incorporates respectively a glutamic adic (Glu), a leucine (Leu), a serine (Ser), a hydroxyglutamine (HOGln), a 2-amino decanoic acid, and 2 cysteins (CysB and CysA). The biosynthesis of 2-amino decanoic acid incorporated in gramillins could be initiated by a fatty acid synthase composed of the alpha and beta subunits FGSG_00036 and FGSG_11656. The cytochrome P450 monooxygenase FGSG_15680 could hydroxylate the fatty acid chain. Subsequent oxidation to the ketone by the oxidoreductase FGSG_00048 and transamination by aminotransferase FGSG_00049 could form 2-amino-decanoic acid. On the other hand, FGSG_15680 could also be responsible for the HO-modified glutamine at the gamma-position. Whether hydroxylation occurs on the fully assembled product or on the Gln residue prior to assembly into the gramillins requires further proof. The thioredoxin FGSG_00043 could also be required for the disulfide-bond formation between CysA and CysB. The specific involvement of the remaining proteins from the cluster is more difficult to discern, but could have broader regulatory (FGSG_00040 and FGSG_11657) or enzymatic functions (FGSG_00044 and FGSG_00045). The final C-domain of GRA1 does not possess the expected sequence of a termination CT domain, often implicated in macrocyclization and release of a cyclopeptidein fungal NRPs; and the thioesterase FGSG_00047 may act in concert with the terminal C-domain of GRA1 to catalyze the formation of the macrocyclic anhydride and release of the products. This is Gramillins biosynthetic cluster protein FGSG_11657 from Gibberella zeae (strain ATCC MYA-4620 / CBS 123657 / FGSC 9075 / NRRL 31084 / PH-1) (Wheat head blight fungus).